The primary structure comprises 254 residues: Putative ankyrin-containing lipoprotein Lxx09580 (254 aa).

The N-terminal stretch at 1–22 (MTEIRYVRLLTLVLASSVLLAG) is a signal peptide. Residue Cys23 is the site of N-palmitoyl cysteine attachment. The S-diacylglycerol cysteine moiety is linked to residue Cys23. 5 ANK repeats span residues 56–85 (AATA…AIED), 89–118 (GGRT…DVNA), 122–151 (IQDS…DVNA), 155–184 (FNGT…DLDH), and 188–222 (PGWT…NPDI).

The protein resides in the cell membrane. This chain is Putative ankyrin-containing lipoprotein Lxx09580, found in Leifsonia xyli subsp. xyli (strain CTCB07).